The primary structure comprises 165 residues: Transcriptional regulator MraZ (165 aa).

SpoVT-AbrB domains follow at residues 5–51 and 80–123; these read TYEG…GEEL and SAEL…NPER.

This sequence belongs to the MraZ family. Forms oligomers.

The protein resides in the cytoplasm. The protein localises to the nucleoid. The protein is Transcriptional regulator MraZ of Hyphomonas neptunium (strain ATCC 15444).